The sequence spans 457 residues: Glycine receptor subunit alpha-1 (457 aa).

The N-terminal stretch at 1–28 (MYSFNTLRLYLWETIVFFSLAASKEAEA) is a signal peptide. Residues 29–250 (ARSASKPMSP…RFHLERQMGY (222 aa)) are Extracellular-facing. Asn66 carries N-linked (GlcNAc...) asparagine glycosylation. The glycine site is built by Arg93 and Ser157. An intrachain disulfide couples Cys166 to Cys180. Glu220 and Asp222 together coordinate Zn(2+). An intrachain disulfide couples Cys226 to Cys237. Position 230–235 (230–235 (YNTGKF)) interacts with strychnine. A glycine-binding site is contributed by Thr232. His243 is a binding site for Zn(2+). The helical transmembrane segment at 251–272 (YLIQMYIPSLLIVILSWISFWI) threads the bilayer. Residues 273–277 (NMDAA) are Cytoplasmic-facing. The helical transmembrane segment at 278-298 (PARVGLGITTVLTMTTQSSGS) threads the bilayer. Over 299 to 309 (RASLPKVSYVK) the chain is Extracellular. Residues 310-330 (AIDIWMAVCLLFVFSALLEYA) traverse the membrane as a helical segment. Over 331–425 (AVNFVSRQHK…FIQRAKKIDK (95 aa)) the chain is Cytoplasmic. Residues 391-410 (KGANNSNTTNPPPAPSKSPE) form a disordered region. A helical membrane pass occupies residues 426–446 (ISRIGFPMAFLIFNMFYWIIY). Residues 447–457 (KIVRREDVHNQ) lie on the Extracellular side of the membrane.

This sequence belongs to the ligand-gated ion channel (TC 1.A.9) family. Glycine receptor (TC 1.A.9.3) subfamily. GLRA1 sub-subfamily. In terms of assembly, interacts with GLRB to form heteropentameric channels; this is probably the predominant form in vivo. Heteropentamer composed of four GLRA1 subunits and one GLRB subunit. Heteropentamer composed of two GLRA1 and three GLRB. Heteropentamer composed of three GLRA1 and two GLRB. Homopentamer (in vitro). Both homopentamers and heteropentamers form functional ion channels, but their characteristics are subtly different. In terms of tissue distribution, detected on spinal cord neurons (at protein level). Detected in spinal cord.

It is found in the postsynaptic cell membrane. It localises to the synapse. The protein resides in the perikaryon. Its subcellular location is the cell projection. The protein localises to the dendrite. It is found in the cell membrane. The catalysed reaction is chloride(in) = chloride(out). With respect to regulation, channel opening is triggered by extracellular glycine. Channel characteristics depend on the subunit composition; heteropentameric channels are activated by lower glycine levels and display faster desensitization. Its function is as follows. Subunit of heteromeric glycine-gated chloride channels. Plays an important role in the down-regulation of neuronal excitability. Contributes to the generation of inhibitory postsynaptic currents. Channel activity is potentiated by ethanol. Potentiation of channel activity by intoxicating levels of ethanol contribute to the sedative effects of ethanol. In Bos taurus (Bovine), this protein is Glycine receptor subunit alpha-1 (GLRA1).